Here is a 1503-residue protein sequence, read N- to C-terminus: Lysophospholipase NTE1 (1503 aa).

At 1–25 (MDSSTAALATASAKLDAVAQQGSSS) the chain is on the cytoplasmic side. A helical membrane pass occupies residues 26 to 46 (WIGFFANIILGIISLVYSILY). The Lumenal segment spans residues 47–71 (SVLKLTTFSIPSLLYTLFSTSLTVT). Residues 72–92 (MNATTLMLIIVLVFSLVSWFV) traverse the membrane as a helical segment. Residues 93 to 1503 (RYRYLNMYSR…RTMAPRRASI (1411 aa)) are Cytoplasmic-facing. 3 disordered regions span residues 252 to 348 (RHGG…TTSV), 454 to 561 (TKGI…SNPF), and 722 to 745 (KNES…RFMD). Polar residues-rich tracts occupy residues 262–272 (TSATETYTSSR), 285–302 (STVS…SSHG), 487–496 (QRPSSVTASP), 506–542 (KHTS…STLL), 552–561 (PLSQRTSNPF), and 723–737 (NESS…QQGS). Residues 658 to 777 (GLPV…GYVG) and 821 to 941 (RLTN…IASR) each bind a nucleoside 3',5'-cyclic phosphate. The PNPLA domain maps to 1200 to 1364 (LVLGGGGARG…IDNLTVSHMK (165 aa)). The GXGXXG signature appears at 1204 to 1209 (GGGARG). Positions 1231–1235 (GTSIG) match the GXSXG motif. The active-site Nucleophile is the serine 1233. Catalysis depends on aspartate 1351, which acts as the Proton acceptor. The short motif at 1351 to 1353 (DGG) is the DGA/G element.

The protein belongs to the NTE family.

Its subcellular location is the endoplasmic reticulum membrane. The enzyme catalyses a 1-acyl-sn-glycero-3-phosphocholine + H2O = sn-glycerol 3-phosphocholine + a fatty acid + H(+). Inhibited by organophosphorus esters. Intracellular phospholipase B that catalyzes the double deacylation of phosphatidylcholine (PC) to glycerophosphocholine (GroPCho). Plays an important role in membrane lipid homeostasis. Responsible for the rapid PC turnover in response to inositol, elevated temperatures, or when choline is present in the growth medium. In Pyricularia oryzae (strain 70-15 / ATCC MYA-4617 / FGSC 8958) (Rice blast fungus), this protein is Lysophospholipase NTE1 (NTE1).